The chain runs to 157 residues: Transcription elongation factor GreA (157 aa).

Belongs to the GreA/GreB family.

Its function is as follows. Necessary for efficient RNA polymerase transcription elongation past template-encoded arresting sites. The arresting sites in DNA have the property of trapping a certain fraction of elongating RNA polymerases that pass through, resulting in locked ternary complexes. Cleavage of the nascent transcript by cleavage factors such as GreA or GreB allows the resumption of elongation from the new 3'terminus. GreA releases sequences of 2 to 3 nucleotides. In Chelativorans sp. (strain BNC1), this protein is Transcription elongation factor GreA.